Reading from the N-terminus, the 131-residue chain is Holo-[acyl-carrier-protein] synthase (131 aa).

Mg(2+) contacts are provided by D6 and E55.

Belongs to the P-Pant transferase superfamily. AcpS family. It depends on Mg(2+) as a cofactor.

It localises to the cytoplasm. The enzyme catalyses apo-[ACP] + CoA = holo-[ACP] + adenosine 3',5'-bisphosphate + H(+). In terms of biological role, transfers the 4'-phosphopantetheine moiety from coenzyme A to a Ser of acyl-carrier-protein. This is Holo-[acyl-carrier-protein] synthase from Verminephrobacter eiseniae (strain EF01-2).